The primary structure comprises 687 residues: Adhesion G-protein coupled receptor G1 (687 aa).

Positions 1–25 (MTAQSLLQTTLFLLSLLFLVQGAHG) are cleaved as a signal peptide. Residue 26–33 (RGHREDFR) participates in heparin binding. The Extracellular segment spans residues 26–402 (RGHREDFRFC…VEVDAVHKHY (377 aa)). 2 disulfide bridges follow: Cys-35–Cys-91 and Cys-121–Cys-177. N-linked (GlcNAc...) asparagine glycosylation is found at Asn-39, Asn-148, and Asn-171. Residue 190-200 (LKHPQKASRRP) coordinates heparin. A GAIN-B domain is found at 224-395 (DTVSFEEDRI…AVLMVSSVEV (172 aa)). N-linked (GlcNAc...) asparagine glycans are attached at residues Asn-234, Asn-303, Asn-324, and Asn-341. Intrachain disulfides connect Cys-346–Cys-377 and Cys-366–Cys-379. Residues 346-395 (CVFWVEDPTLSSPGHWSSAGCETVRRETQTSCLCNHLTYFAVLMVSSVEV) form a GPS region. The tract at residues 384 to 397 (YFAVLMVSSVEVDA) is stachel. Residues 403 to 423 (LSLLSYVGCVVSALACVVTIA) traverse the membrane as a helical segment. Topologically, residues 424 to 442 (AYLCSRRKPRDYTIKVHMN) are cytoplasmic. Residues 443–463 (LLLAVFLLDTSFLLSEPVALT) form a helical membrane-spanning segment. Topologically, residues 464–470 (GSEAGCR) are extracellular. A helical transmembrane segment spans residues 471-491 (ASAIFLHFSLLACLSWMGLEG). At 492-512 (YNLYRLVVEVFGTYVPGYLLK) the chain is on the cytoplasmic side. A helical transmembrane segment spans residues 513-533 (LSAMGWGFPIFLVTLVALVDV). Residues 534-570 (DNYGPIILAVHRTPEGVIYPSMCWIRDSLVSYITNLG) lie on the Extracellular side of the membrane. A helical transmembrane segment spans residues 571–591 (LFSLVFLFNMAMLATMVVQIL). Topologically, residues 592-603 (RLRPHTQKWSHV) are cytoplasmic. Residues 604-624 (LTLLGLSLVLGLPWALIFFSF) traverse the membrane as a helical segment. The Extracellular portion of the chain corresponds to 625-630 (ASGTFQ). A helical membrane pass occupies residues 631–651 (LVILYLFSIITSFQGFLIFIW). Residues 652 to 687 (YWSMRLQARGGPSPLKSNSDSARLPISSGSTSSSRI) are Cytoplasmic-facing. The tract at residues 664-687 (SPLKSNSDSARLPISSGSTSSSRI) is disordered. Low complexity predominate over residues 678-687 (SSGSTSSSRI).

It belongs to the G-protein coupled receptor 2 family. LN-TM7 subfamily. Heterodimer of 2 chains generated by proteolytic processing; the large extracellular N-terminal fragment (ADGRG1 NT) and the membrane-bound C-terminal fragment (ADGRG1-CT) predominantly remain associated and non-covalently linked. ADGRG1 NT self-associates in a trans-trans manner; the homophilic interaction enhances receptor signaling. Interacts with TGM2. Interacts with heparin; leading to the reduction of ADGRG1 shedding. Interacts with COL3A1. Part of a GPCR-tetraspanin complex at least consisting of ADGRG1, CD81, eventually CD9, and GNA11 in which CD81 is enhancing the association of ADGRG1 with GNA11. In terms of processing, autoproteolytically cleaved into 2 fragments; the large extracellular N-terminal fragment (ADGRG1 NT) and the membrane-bound C-terminal fragment (ADGRG1 CT) predominantly remain associated and non-covalently linked. Shedding to yield the secreted ADGRG1 N-terminal fragment seems to involve metalloprotease(s). Ubiquitinated. Undergoes polyubiquitination upon activation.

The protein localises to the cell membrane. Its subcellular location is the secreted. It localises to the membrane raft. With respect to regulation, forms a heterodimer of 2 chains generated by proteolytic processing that remain associated through non-covalent interactions mediated by the GAIN-B domain. In the inactivated receptor, the Stachel sequence (also named stalk) is embedded in the GAIN-B domain, where it adopts a beta-strand conformation. On activation, the Stachel moves into the 7 transmembrane region and adopts a twisted hook-shaped configuration that forms contacts within the receptor, leading to coupling of a G-alpha protein, which activates signaling. The cleaved GAIN-B and N-terminal domains can then dissociate from the rest of the receptor. In terms of biological role, adhesion G-protein coupled receptor (aGPCR) for steroid hormone 17alpha-hydroxypregnenolone (17-OH), which is involved in cell adhesion and cell-cell interactions. Ligand binding causes a conformation change that triggers signaling via guanine nucleotide-binding proteins (G proteins) and modulates the activity of downstream effectors, such as RhoA pathway. ADGRG1 is coupled to G(12) and/or G(13) G proteins (GNA12 and GNA13, respectively) and mediates the activation Rho small GTPases. Acts as a potent suppressor of ferroptosis: binding to 17-OH-binding initiates signaling that down-regulates CD36 and alleviates ferroptosis-induced liver injury. Ligand-binding also induces cell adhesion activity via association with proteins such as collagen III/COL3A1 and TGM2. Mediates cell matrix adhesion in developing neurons and hematopoietic stem cells. Involved in cortical development, specifically in maintenance of the pial basement membrane integrity and in cortical lamination: association with COL3A1 in the developing brain inhibits neuronal migration via activation of the RhoA pathway. Together with TGM2, acts as a regulator of myelination and myelin repair in oligodendrocyte precursor cells. Acts as a hemostatic sensor of shear force: G protein-coupled receptor signaling is activated in response to shear force in platelets, promoting G(13) G protein signaling, and platelet shape change and aggregation in a COL3A1-dependent manner. Acts as an inhibitor of VEGFA production thereby inhibiting angiogenesis through a signaling pathway mediated by PRKCA. Plays a role in the maintenance of hematopoietic stem cells in bone marrow niche. Plays an essential role in testis development. This Pan troglodytes (Chimpanzee) protein is Adhesion G-protein coupled receptor G1 (ADGRG1).